We begin with the raw amino-acid sequence, 455 residues long: Phosphomethylpyrimidine synthase (455 aa).

Residues Asn-80, Met-109, Tyr-139, His-175, 195-197 (SRG), 236-239 (DSLR), and Glu-275 contribute to the substrate site. Position 279 (His-279) interacts with Zn(2+). Tyr-302 lines the substrate pocket. Zn(2+) is bound at residue His-343. [4Fe-4S] cluster is bound by residues Cys-423, Cys-426, and Cys-431.

Belongs to the ThiC family. It depends on [4Fe-4S] cluster as a cofactor.

The enzyme catalyses 5-amino-1-(5-phospho-beta-D-ribosyl)imidazole + S-adenosyl-L-methionine = 4-amino-2-methyl-5-(phosphooxymethyl)pyrimidine + CO + 5'-deoxyadenosine + formate + L-methionine + 3 H(+). The protein operates within cofactor biosynthesis; thiamine diphosphate biosynthesis. Functionally, catalyzes the synthesis of the hydroxymethylpyrimidine phosphate (HMP-P) moiety of thiamine from aminoimidazole ribotide (AIR) in a radical S-adenosyl-L-methionine (SAM)-dependent reaction. This is Phosphomethylpyrimidine synthase from Synechococcus sp. (strain JA-2-3B'a(2-13)) (Cyanobacteria bacterium Yellowstone B-Prime).